Consider the following 235-residue polypeptide: tRNA (guanine-N(1)-)-methyltransferase (235 aa).

S-adenosyl-L-methionine contacts are provided by residues glycine 114 and 134-139 (IGDYIL).

The protein belongs to the RNA methyltransferase TrmD family. Homodimer.

Its subcellular location is the cytoplasm. It carries out the reaction guanosine(37) in tRNA + S-adenosyl-L-methionine = N(1)-methylguanosine(37) in tRNA + S-adenosyl-L-homocysteine + H(+). Specifically methylates guanosine-37 in various tRNAs. The protein is tRNA (guanine-N(1)-)-methyltransferase of Ehrlichia ruminantium (strain Gardel).